A 187-amino-acid polypeptide reads, in one-letter code: UPF0232 protein MUL_0004 (187 aa).

Residues 1–12 show a composition bias toward gly residues; it reads MNGDGEQPGPGD. Disordered regions lie at residues 1–77 and 166–187; these read MNGD…QPLG and ASPSWRKGPRHIAGRGPRDTYG. Residues 14-30 show a composition bias toward basic and acidic residues; sequence AARDELPSMDLVRRTLA. Over residues 31 to 55 the composition is skewed to low complexity; it reads EARAAARARGQDPGRGFAAGPAPRR.

This sequence belongs to the UPF0232 family.

This is UPF0232 protein MUL_0004 from Mycobacterium ulcerans (strain Agy99).